Reading from the N-terminus, the 44-residue chain is Protein PsbN (44 aa).

The chain crosses the membrane as a helical span at residues 6-26 (FFFTLFLWFFLLSITIYSIYI).

It belongs to the PsbN family.

It localises to the plastid. The protein localises to the chloroplast thylakoid membrane. May play a role in photosystem I and II biogenesis. In Oedogonium cardiacum (Filamentous green alga), this protein is Protein PsbN.